The following is an 883-amino-acid chain: Phosphoenolpyruvate carboxylase (883 aa).

Active-site residues include H138 and K546.

Belongs to the PEPCase type 1 family. The cofactor is Mg(2+).

It catalyses the reaction oxaloacetate + phosphate = phosphoenolpyruvate + hydrogencarbonate. Forms oxaloacetate, a four-carbon dicarboxylic acid source for the tricarboxylic acid cycle. This Escherichia coli O81 (strain ED1a) protein is Phosphoenolpyruvate carboxylase.